The following is a 153-amino-acid chain: 6,7-dimethyl-8-ribityllumazine synthase (153 aa).

5-amino-6-(D-ribitylamino)uracil contacts are provided by residues F22, 56–58, and 80–82; these read AFE and TVI. Residue 85 to 86 participates in (2S)-2-hydroxy-3-oxobutyl phosphate binding; that stretch reads ST. Residue H88 is the Proton donor of the active site. F113 serves as a coordination point for 5-amino-6-(D-ribitylamino)uracil. R127 contacts (2S)-2-hydroxy-3-oxobutyl phosphate.

Belongs to the DMRL synthase family. Forms an icosahedral capsid composed of 60 subunits, arranged as a dodecamer of pentamers.

The enzyme catalyses (2S)-2-hydroxy-3-oxobutyl phosphate + 5-amino-6-(D-ribitylamino)uracil = 6,7-dimethyl-8-(1-D-ribityl)lumazine + phosphate + 2 H2O + H(+). It functions in the pathway cofactor biosynthesis; riboflavin biosynthesis; riboflavin from 2-hydroxy-3-oxobutyl phosphate and 5-amino-6-(D-ribitylamino)uracil: step 1/2. Catalyzes the formation of 6,7-dimethyl-8-ribityllumazine by condensation of 5-amino-6-(D-ribitylamino)uracil with 3,4-dihydroxy-2-butanone 4-phosphate. This is the penultimate step in the biosynthesis of riboflavin. In Actinobacillus pleuropneumoniae serotype 3 (strain JL03), this protein is 6,7-dimethyl-8-ribityllumazine synthase.